The primary structure comprises 148 residues: UPF0756 membrane protein YeaL (148 aa).

A run of 4 helical transmembrane segments spans residues 14–34, 51–71, 86–106, and 121–141; these read ALGF…LIIV, LSIG…SGTL, LVAI…VTLM, and VLGV…AGLV.

It belongs to the UPF0756 family.

Its subcellular location is the cell membrane. The polypeptide is UPF0756 membrane protein YeaL (Escherichia coli (strain B / REL606)).